Here is a 364-residue protein sequence, read N- to C-terminus: Developmentally-regulated GTP-binding protein 2 (364 aa).

Residue lysine 21 is modified to (3S)-3-hydroxylysine. The 226-residue stretch at 63-288 (ARVALIGFPS…LLEMLWEYLA (226 aa)) folds into the OBG-type G domain. Residues 69–76 (GFPSVGKS), 94–98 (FTTLT), 115–118 (DLPG), 246–249 (NKID), and 269–271 (SCG) contribute to the GTP site. 2 residues coordinate Mg(2+): serine 76 and threonine 96. Residues 288 to 363 (ALTCIYTKKR…EHEDVIQIVK (76 aa)) form the TGS domain.

Belongs to the TRAFAC class OBG-HflX-like GTPase superfamily. OBG GTPase family. As to quaternary structure, interacts with RWDD1; this interaction confers protection to polyubiquitination and proteolytic degradation. Interacts with JMJD7; this interaction is direct. Mg(2+) is required as a cofactor. In terms of processing, hydroxylated (with S stereochemistry) at C-3 of Lys-21 by JMJD7; this modification hinders trypsin-catalyzed proteolysis in vitro. Polyubiquitinated. As to expression, highest levels in skeletal muscle, heart and kidney. Low levels in colon, thymus, spleen, small intestine, lung and Leukocytes.

It is found in the nucleus. It localises to the cytoplasm. It carries out the reaction GTP + H2O = GDP + phosphate + H(+). Catalyzes the conversion of GTP to GDP through hydrolysis of the gamma-phosphate bond in GTP. When hydroxylated at C-3 of 'Lys-21' by JMJD7, may bind to RNA and play a role in translation. The sequence is that of Developmentally-regulated GTP-binding protein 2 from Homo sapiens (Human).